Here is a 497-residue protein sequence, read N- to C-terminus: Serine/threonine-protein phosphatase 2A 56 kDa regulatory subunit beta isoform (497 aa).

Residues 1–19 (METKLPPASTPTSPSSPGL) are compositionally biased toward low complexity. 2 disordered regions span residues 1-55 (METK…YQSN) and 475-497 (TQGA…GGQS). Phosphoserine; by CLK2 is present on residues S32, S35, S44, S46, S47, and S48. The segment covering 34–45 (RSLRRARPRRSH) has biased composition (basic residues).

Belongs to the phosphatase 2A regulatory subunit B56 family. Component of the serine/threonine-protein phosphatase 2A complex (PP2A). This complex consists of a common heterodimeric core enzyme, composed of a 36 kDa catalytic subunit (subunit C) and a 65 kDa constant scaffold subunit (PR65 or subunit A), that associates with a variety of regulatory subunits. Proteins that associate with the core dimer include three families of regulatory subunits B (the R2/B/PR55/B55, R3/B''/PR72/PR130/PR59 and R5/B'/B56 families), the 48 kDa variable regulatory subunit, viral proteins, and cell signaling molecules. Interacts with SGO1. Interacts with AKT1. Interacts with CUL3 and KLHL15; this interaction leads to proteasomal degradation. Post-translationally, ubiquitinated by E3 CUL3-KLHL15 complex; this modification leads to proteasomal degradation. Highest expression in brain.

Its subcellular location is the cytoplasm. Functionally, as the regulatory component of the serine/threonine-protein phosphatase 2A (PP2A) holoenzyme, modulates substrate specificity, subcellular localization, and responsiveness to phosphorylation. The phosphorylated form mediates the interaction between PP2A and AKT1, leading to AKT1 dephosphorylation. The sequence is that of Serine/threonine-protein phosphatase 2A 56 kDa regulatory subunit beta isoform (PPP2R5B) from Homo sapiens (Human).